The sequence spans 279 residues: Proto-oncogene FRAT1 (279 aa).

Disordered regions lie at residues 1–24 (MPCRREEEEEAGEEAEGEEEEEDS) and 56–76 (AQHSPASPCGPPGAPLRAPGP). Residues 7–24 (EEEEAGEEAEGEEEEEDS) show a composition bias toward acidic residues. A Phosphoserine modification is found at Ser-88. 2 disordered regions span residues 136–200 (GPSA…DDPH) and 228–279 (RAKL…VPGS). Positions 198–220 (DPHRLLQQLVLSGNLIKEAVRRL) are involved in GSK-3 binding. 2 positions are modified to phosphoserine: Ser-249 and Ser-252.

This sequence belongs to the GSK-3-binding protein family. Binds DVL1. Binds GSK-3 and prevent GSK-3-dependent phosphorylation. Phosphorylated.

Its subcellular location is the cytoplasm. In terms of biological role, positively regulates the Wnt signaling pathway by stabilizing beta-catenin through the association with GSK-3. May play a role in tumor progression and collaborate with PIM1 and MYC in lymphomagenesis. The sequence is that of Proto-oncogene FRAT1 (FRAT1) from Homo sapiens (Human).